A 316-amino-acid polypeptide reads, in one-letter code: Ferrochelatase (316 aa).

2 residues coordinate Fe cation: His-188 and Glu-269.

It belongs to the ferrochelatase family.

The protein resides in the cytoplasm. The enzyme catalyses heme b + 2 H(+) = protoporphyrin IX + Fe(2+). It participates in porphyrin-containing compound metabolism; protoheme biosynthesis; protoheme from protoporphyrin-IX: step 1/1. In terms of biological role, catalyzes the ferrous insertion into protoporphyrin IX. In Wolinella succinogenes (strain ATCC 29543 / DSM 1740 / CCUG 13145 / JCM 31913 / LMG 7466 / NCTC 11488 / FDC 602W) (Vibrio succinogenes), this protein is Ferrochelatase.